The chain runs to 575 residues: Arginine--tRNA ligase (575 aa).

The 'HIGH' region signature appears at P122–H132.

Belongs to the class-I aminoacyl-tRNA synthetase family. Monomer.

Its subcellular location is the cytoplasm. The catalysed reaction is tRNA(Arg) + L-arginine + ATP = L-arginyl-tRNA(Arg) + AMP + diphosphate. The protein is Arginine--tRNA ligase of Actinobacillus succinogenes (strain ATCC 55618 / DSM 22257 / CCUG 43843 / 130Z).